A 1091-amino-acid polypeptide reads, in one-letter code: Self-sufficient cytochrome P450 monooxygenase CYP505E1 (1091 aa).

Cys-433 is a heme binding site. One can recognise a Flavodoxin-like domain in the interval 528 to 669 (ICFFYGSNSG…DLEAWEETSL (142 aa)). Residues 534 to 538 (SNSGT) and 613 to 645 (VFGC…TRLA) each bind FMN. Residues 707 to 935 (KDLMEARVTT…RPAKEAFHLP (229 aa)) enclose the FAD-binding FR-type domain.

The protein in the N-terminal section; belongs to the cytochrome P450 family. FAD serves as cofactor. FMN is required as a cofactor. The cofactor is heme.

The enzyme catalyses 2 oxidized [cytochrome P450] + NADPH = 2 reduced [cytochrome P450] + NADP(+) + H(+). It carries out the reaction an organic molecule + reduced [NADPH--hemoprotein reductase] + O2 = an alcohol + oxidized [NADPH--hemoprotein reductase] + H2O + H(+). It catalyses the reaction dodecanoate + reduced [NADPH--hemoprotein reductase] + O2 = 5-hydroxydodecanoate + oxidized [NADPH--hemoprotein reductase] + H2O + H(+). The catalysed reaction is tetradecanoate + reduced [NADPH--hemoprotein reductase] + O2 = 7-hydroxytetradecanoate + oxidized [NADPH--hemoprotein reductase] + H2O + H(+). The enzyme catalyses dodecan-1-ol + reduced [NADPH--hemoprotein reductase] + O2 = 1,5-dodecanediol + oxidized [NADPH--hemoprotein reductase] + H2O + H(+). It carries out the reaction dodecan-1-ol + reduced [NADPH--hemoprotein reductase] + O2 = 1,4-dodecanediol + oxidized [NADPH--hemoprotein reductase] + H2O + H(+). It catalyses the reaction dodecan-1-ol + reduced [NADPH--hemoprotein reductase] + O2 = 1,6-dodecanediol + oxidized [NADPH--hemoprotein reductase] + H2O + H(+). In terms of biological role, self-sufficient cytochrome P450 monooxygenase that catalyzes the regioselective in-chain hydroxylation of alkanes, fatty alcohols, and fatty acids at the omega-7 position. Performs hydroxylation of C10-C16 n-alkanes and C12 and C14 fatty alcohols; and thereby enables the one step biocatalytic synthesis of rare alcohols such as 5-dodecanol and 7-tetradecanol. Converts 1-dodecanol into 1,5-dodecanediol as major product with very little sub-terminally hydroxylated products with the 1,4-dodecanediol and 1,6-dodecanediol more abundant. Converts dodecanoic acid to 5-hydroxydodecanoic acid which can be further converted into delta-dodecalactone by lactonization of the 5-hydroxy acid at low pH. Also gives sub-terminal hydroxylation of dodecanoic acid with 9-hydroxydodecanoic acid being the second most abundant product. This is Self-sufficient cytochrome P450 monooxygenase CYP505E1 from Aspergillus niger (strain ATCC MYA-4892 / CBS 513.88 / FGSC A1513).